The following is a 160-amino-acid chain: Cytochrome b6-f complex subunit 4 (160 aa).

The next 3 helical transmembrane spans lie at 36–56, 95–115, and 127–147; these read LLYT…GLAV, LLGI…PFIE, and PIAM…GVAA.

Belongs to the cytochrome b family. PetD subfamily. As to quaternary structure, the 4 large subunits of the cytochrome b6-f complex are cytochrome b6, subunit IV (17 kDa polypeptide, PetD), cytochrome f and the Rieske protein, while the 4 small subunits are PetG, PetL, PetM and PetN. The complex functions as a dimer.

The protein localises to the cellular thylakoid membrane. Its function is as follows. Component of the cytochrome b6-f complex, which mediates electron transfer between photosystem II (PSII) and photosystem I (PSI), cyclic electron flow around PSI, and state transitions. This is Cytochrome b6-f complex subunit 4 from Prochlorothrix hollandica.